The following is a 1969-amino-acid chain: Hybrid signal transduction histidine kinase B (1969 aa).

Residues 1 to 10 (MEKSEQTNSF) show a composition bias toward polar residues. 5 disordered regions span residues 1–91 (MEKS…HETK), 218–335 (KINE…KTKQ), 412–436 (QQQQQHHRHYHHHINSGGSSGSSDK), 468–505 (NNINIQAPSTPVQSRNYPLFTTQSPKNANSASKSKNKL), and 551–598 (GSGG…YNNN). The span at 11–55 (ESSNNNNNNIDSNINNNLENNNNKNNNNNNNNNNNNNNNNNNIEN) shows a compositional bias: low complexity. Residues 56–65 (SIDKNNKEDN) are compositionally biased toward basic and acidic residues. Positions 72–86 (SHRKHRTRLKSKKGN) are enriched in basic residues. A compositionally biased stretch (polar residues) spans 242–252 (TNSSILKSSEQ). Over residues 280 to 292 (SSSSDEGSDNSKS) the composition is skewed to low complexity. A compositionally biased stretch (polar residues) spans 293–304 (QHSSVNTPTLSR). The segment covering 313–335 (SQQSQKQSQQQSQQPQQQNKTKQ) has biased composition (low complexity). Positions 416–425 (QHHRHYHHHI) are enriched in basic residues. The segment covering 469 to 492 (NINIQAPSTPVQSRNYPLFTTQSP) has biased composition (polar residues). The segment covering 551 to 571 (GSGGGGSGGGGGGGGGGGGIG) has biased composition (gly residues). Over residues 574-598 (SSFLDDNNNLNNGENFKNSNSYNNN) the composition is skewed to low complexity. 5 helical membrane passes run 660–680 (AYILNFLNLVLFVVYLLSTIL), 684–704 (EWFIFAPGILLSVIYFFLGKI), 708–728 (MYLIAFLTISTAVAINITSII), 747–767 (LVMIMVPLLFPSIVYSIVILI), and 795–815 (FGELLRSIIIVFVILMFYTIL). One can recognise a Histidine kinase domain in the interval 967–1188 (TVSHELRTPI…TFSFTIPCGI (222 aa)). His970 is subject to Phosphohistidine; by autocatalysis. Disordered regions lie at residues 1359 to 1415 (ASKD…HQLI), 1521 to 1563 (GIAL…TTQS), 1617 to 1709 (NNNF…SSHS), and 1755 to 1832 (QKPQ…TAAA). Residues 1373–1398 (GDGGRSLSGGGGGVGSNGNGNGGGGL) are compositionally biased toward gly residues. 2 stretches are compositionally biased toward low complexity: residues 1399–1410 (DSNISPSELSSS) and 1527–1549 (SSSKSPSIPSSSSASASALSPNS). Polar residues-rich tracts occupy residues 1554 to 1563 (ELGNGKTTQS) and 1626 to 1665 (KPSTPTFLSNQPSPATSNSPQLLQSPTTSTTGSINLSPHR). 2 stretches are compositionally biased toward low complexity: residues 1755-1774 (QKPQQQQQKPTTTTTTTSTQ) and 1781-1821 (KTTT…TTTT). Positions 1840–1967 (KILLVEDNFV…DILIQMIKKH (128 aa)) constitute a Response regulatory domain. Position 1889 is a 4-aspartylphosphate (Asp1889).

It localises to the membrane. The enzyme catalyses ATP + protein L-histidine = ADP + protein N-phospho-L-histidine.. Acts in the cytokinin signal transduction pathway that regulates spore germination. Required for the maintenance of spore dormancy. Does not appear to act as a cytokinin receptor. Probably undergoes ATP-dependent autophosphorylation at a conserved histidine residue in the kinase core, which is followed by transfer of the phosphoryl group to a conserved aspartate residue in the receiver domain. The protein is Hybrid signal transduction histidine kinase B (dhkB) of Dictyostelium discoideum (Social amoeba).